The sequence spans 160 residues: Cytochrome b6-f complex subunit 4 (160 aa).

Over 1 to 35 the chain is Cytoplasmic; it reads MATLKKPDLSDPKLRAKLAKGMGHNYYGEPAWPND. The chain crosses the membrane as a helical span at residues 36 to 56; that stretch reads LLYVFPVVIMGTFACIVALSV. Over 57–94 the chain is Lumenal, thylakoid; it reads LDPAMVGEPADPFATPLEILPEWYLYPVFQILRSVPNK. The chain crosses the membrane as a helical span at residues 95-115; the sequence is LLGVLLMASVPLGLILVPFIE. Residues 116-130 are Cytoplasmic-facing; that stretch reads NVNKFQNPFRRPVAT. The helical transmembrane segment at 131–151 threads the bilayer; sequence TIFLFGTLVTIWLGIGATFPL. The Lumenal, thylakoid portion of the chain corresponds to 152–160; sequence DKTLTLGLF.

The protein belongs to the cytochrome b family. PetD subfamily. As to quaternary structure, the 4 large subunits of the cytochrome b6-f complex are cytochrome b6, subunit IV (17 kDa polypeptide, PetD), cytochrome f and the Rieske protein, while the 4 small subunits are PetG, PetL, PetM and PetN. The complex functions as a dimer.

It localises to the cellular thylakoid membrane. Component of the cytochrome b6-f complex, which mediates electron transfer between photosystem II (PSII) and photosystem I (PSI), cyclic electron flow around PSI, and state transitions. This is Cytochrome b6-f complex subunit 4 from Mastigocladus laminosus (Fischerella sp.).